The sequence spans 474 residues: 3-isopropylmalate dehydratase large subunit (474 aa).

Cys355, Cys415, and Cys418 together coordinate [4Fe-4S] cluster.

It belongs to the aconitase/IPM isomerase family. LeuC type 1 subfamily. As to quaternary structure, heterodimer of LeuC and LeuD. [4Fe-4S] cluster serves as cofactor.

The enzyme catalyses (2R,3S)-3-isopropylmalate = (2S)-2-isopropylmalate. The protein operates within amino-acid biosynthesis; L-leucine biosynthesis; L-leucine from 3-methyl-2-oxobutanoate: step 2/4. Functionally, catalyzes the isomerization between 2-isopropylmalate and 3-isopropylmalate, via the formation of 2-isopropylmaleate. The protein is 3-isopropylmalate dehydratase large subunit of Shewanella putrefaciens (strain CN-32 / ATCC BAA-453).